A 113-amino-acid chain; its full sequence is MPRGMGWGRGRGRRRKMRMIGFIPQVRHFYPAQPPVFQPKPPIFMTYEEFEALRLVDYEGLTQEEAGQRMGVSRGTVWRALTSARKKVAQMLVEGRELIILPGGNEVPRGADE.

The protein belongs to the UPF0251 family.

This is UPF0251 protein TK0562 from Thermococcus kodakarensis (strain ATCC BAA-918 / JCM 12380 / KOD1) (Pyrococcus kodakaraensis (strain KOD1)).